A 387-amino-acid polypeptide reads, in one-letter code: Cytochrome b (387 aa).

4 consecutive transmembrane segments (helical) span residues 32–52 (FGSLLACVLVIQIVIGILLAC), 76–98 (FLLRAFHANGASFFFIFLYLHIG), 113–133 (TWNIGVIIFLLTIITAFLGYC), and 179–199 (FFSLHYLMPFVIAALSVMHLI). The heme b site is built by H82 and H96. Positions 183 and 197 each coordinate heme b. H202 serves as a coordination point for a ubiquinone. 4 helical membrane-spanning segments follow: residues 225–245 (YLIKDLITIFIFLIGINYMAF), 289–309 (QLGVIAMLLSILVLLLLPLLD), 321–341 (FGKFFFWTFVADFVILAWIGG), and 348–368 (FITIGAIATIFYFSYFFILIP).

Belongs to the cytochrome b family. As to quaternary structure, fungal cytochrome b-c1 complex contains 10 subunits; 3 respiratory subunits, 2 core proteins and 5 low-molecular weight proteins. Cytochrome b-c1 complex is a homodimer. It depends on heme b as a cofactor.

It is found in the mitochondrion inner membrane. In terms of biological role, component of the ubiquinol-cytochrome c reductase complex (complex III or cytochrome b-c1 complex) that is part of the mitochondrial respiratory chain. The b-c1 complex mediates electron transfer from ubiquinol to cytochrome c. Contributes to the generation of a proton gradient across the mitochondrial membrane that is then used for ATP synthesis. This is Cytochrome b (cob) from Schizosaccharomyces pombe (strain 972 / ATCC 24843) (Fission yeast).